The following is a 210-amino-acid chain: Large ribosomal subunit protein uL4 (210 aa).

Residues 56-80 are disordered; that stretch reads FVSGGGKKPWRQKGTGRARAGSTRS.

It belongs to the universal ribosomal protein uL4 family. Part of the 50S ribosomal subunit.

Functionally, one of the primary rRNA binding proteins, this protein initially binds near the 5'-end of the 23S rRNA. It is important during the early stages of 50S assembly. It makes multiple contacts with different domains of the 23S rRNA in the assembled 50S subunit and ribosome. In terms of biological role, forms part of the polypeptide exit tunnel. The protein is Large ribosomal subunit protein uL4 of Solidesulfovibrio magneticus (strain ATCC 700980 / DSM 13731 / RS-1) (Desulfovibrio magneticus).